Here is a 354-residue protein sequence, read N- to C-terminus: Uroporphyrinogen decarboxylase (354 aa).

Substrate contacts are provided by residues 27–31 (RQAGR), Asp77, Tyr154, Thr209, and His327.

This sequence belongs to the uroporphyrinogen decarboxylase family. In terms of assembly, homodimer.

Its subcellular location is the cytoplasm. The enzyme catalyses uroporphyrinogen III + 4 H(+) = coproporphyrinogen III + 4 CO2. It functions in the pathway porphyrin-containing compound metabolism; protoporphyrin-IX biosynthesis; coproporphyrinogen-III from 5-aminolevulinate: step 4/4. Catalyzes the decarboxylation of four acetate groups of uroporphyrinogen-III to yield coproporphyrinogen-III. This is Uroporphyrinogen decarboxylase from Shigella flexneri serotype 5b (strain 8401).